The primary structure comprises 210 residues: Thymidylate kinase (210 aa).

10 to 17 (GPEGAGKS) contacts ATP.

It belongs to the thymidylate kinase family.

It catalyses the reaction dTMP + ATP = dTDP + ADP. In terms of biological role, phosphorylation of dTMP to form dTDP in both de novo and salvage pathways of dTTP synthesis. This is Thymidylate kinase from Pseudomonas syringae pv. syringae (strain B728a).